The chain runs to 413 residues: Tyrosine--tRNA ligase (413 aa).

Positions 59 to 68 (PTAPDIHLGH) match the 'HIGH' region motif. Residues 243 to 247 (KMSKS) carry the 'KMSKS' region motif. Lys246 provides a ligand contact to ATP. Positions 351 to 411 (LAIGQLLKQA…GKRRFARVTL (61 aa)) constitute an S4 RNA-binding domain.

The protein belongs to the class-I aminoacyl-tRNA synthetase family. TyrS type 2 subfamily. In terms of assembly, homodimer.

Its subcellular location is the cytoplasm. The enzyme catalyses tRNA(Tyr) + L-tyrosine + ATP = L-tyrosyl-tRNA(Tyr) + AMP + diphosphate + H(+). Catalyzes the attachment of tyrosine to tRNA(Tyr) in a two-step reaction: tyrosine is first activated by ATP to form Tyr-AMP and then transferred to the acceptor end of tRNA(Tyr). The sequence is that of Tyrosine--tRNA ligase from Burkholderia thailandensis (strain ATCC 700388 / DSM 13276 / CCUG 48851 / CIP 106301 / E264).